The sequence spans 93 residues: Alpha-defensin 24 (93 aa).

An N-terminal signal peptide occupies residues methionine 1–alanine 19. Residues aspartate 20 to serine 58 constitute a propeptide that is removed on maturation. The segment at glutamine 23 to leucine 54 is disordered. 3 cysteine pairs are disulfide-bonded: cysteine 64–cysteine 92, cysteine 66–cysteine 81, and cysteine 71–cysteine 91.

Belongs to the alpha-defensin family.

It is found in the secreted. Functionally, may have microbicidal activities. The polypeptide is Alpha-defensin 24 (Defa24) (Mus musculus (Mouse)).